A 313-amino-acid chain; its full sequence is MSHSVIKVSLSAIDQMKMTYSGSLTASVPQGAVFQAKPPGCTITAYQSGKVLFQGKNAAAESARWGTAEPQEKKKTAKKPADPRYAPPADIAGMSVIGSDEVGTGDYFGPMTVVCAYVDKTMLPLMKELGVKDSKDLKDPQIIEIARNLIKTIPYSLLVLKNEKYNSMQEKGMSQGKMKALLHNQAITHLLRKLDGVKPEAILIDQFAEPGVYFNHLKGRDIVKERTYFSTKAEGIHLAVAAASIIARYSFLMEMDKLSRAAGMTLPKGAGPHVDEAAAKLILKKGASALRTFTKLHFANTQKAQRLADKKRS.

Positions 63–85 (ARWGTAEPQEKKKTAKKPADPRY) are disordered. The span at 70 to 82 (PQEKKKTAKKPAD) shows a compositional bias: basic and acidic residues. An RNase H type-2 domain is found at 94-310 (MSVIGSDEVG…TQKAQRLADK (217 aa)). The a divalent metal cation site is built by aspartate 100, glutamate 101, and aspartate 205.

It belongs to the RNase HII family. RnhC subfamily. As to quaternary structure, interacts with the RNA polymerase core. Mn(2+) is required as a cofactor. It depends on Mg(2+) as a cofactor.

The protein resides in the cytoplasm. The catalysed reaction is Endonucleolytic cleavage to 5'-phosphomonoester.. Endonuclease that specifically degrades the RNA of RNA-DNA hybrids. This is Ribonuclease HIII (rnhC) from Bacillus subtilis (strain 168).